We begin with the raw amino-acid sequence, 190 residues long: MDILKDKIRSEGIVLSEHVLKVDAFLNHQIDPQLMQQVGHAFATRFRDQGITKIVTIEASGIAPAVMAGLELGVPVIFARKYQSLTLKDNLYISKVFSFTKQTESTIAISAKHLNAHDHVLVIDDFLANGHAAKALIDLIGQAGASIAGLGIVIEKSFQDGRALLESEGYRVESLARVKSLAGGQVEFLD.

2 residues coordinate xanthine: L20 and N27. Position 128-132 (128-132) interacts with 5-phospho-alpha-D-ribose 1-diphosphate; sequence ANGHA. K156 lines the xanthine pocket.

The protein belongs to the purine/pyrimidine phosphoribosyltransferase family. Xpt subfamily. As to quaternary structure, homodimer.

The protein localises to the cytoplasm. It catalyses the reaction XMP + diphosphate = xanthine + 5-phospho-alpha-D-ribose 1-diphosphate. Its pathway is purine metabolism; XMP biosynthesis via salvage pathway; XMP from xanthine: step 1/1. Functionally, converts the preformed base xanthine, a product of nucleic acid breakdown, to xanthosine 5'-monophosphate (XMP), so it can be reused for RNA or DNA synthesis. This Pseudomonas aeruginosa (strain ATCC 15692 / DSM 22644 / CIP 104116 / JCM 14847 / LMG 12228 / 1C / PRS 101 / PAO1) protein is Xanthine phosphoribosyltransferase.